The sequence spans 113 residues: T cell receptor alpha variable 8-1 (113 aa).

An N-terminal signal peptide occupies residues M1–A20. Residues Q21–N113 form the Ig-like domain. C42 and C110 form a disulfide bridge. A glycan (N-linked (GlcNAc...) asparagine) is linked at N43.

In terms of assembly, alpha-beta TR is a heterodimer composed of an alpha and beta chain; disulfide-linked. The alpha-beta TR is associated with the transmembrane signaling CD3 coreceptor proteins to form the TR-CD3 (TcR or TCR). The assembly of alpha-beta TR heterodimers with CD3 occurs in the endoplasmic reticulum where a single alpha-beta TR heterodimer associates with one CD3D-CD3E heterodimer, one CD3G-CD3E heterodimer and one CD247 homodimer forming a stable octameric structure. CD3D-CD3E and CD3G-CD3E heterodimers preferentially associate with TR alpha and TR beta chains, respectively. The association of the CD247 homodimer is the last step of TcR assembly in the endoplasmic reticulum and is required for transport to the cell surface.

The protein localises to the cell membrane. Functionally, v region of the variable domain of T cell receptor (TR) alpha chain that participates in the antigen recognition. Alpha-beta T cell receptors are antigen specific receptors which are essential to the immune response and are present on the cell surface of T lymphocytes. Recognize peptide-major histocompatibility (MH) (pMH) complexes that are displayed by antigen presenting cells (APC), a prerequisite for efficient T cell adaptive immunity against pathogens. Binding of alpha-beta TR to pMH complex initiates TR-CD3 clustering on the cell surface and intracellular activation of LCK that phosphorylates the ITAM motifs of CD3G, CD3D, CD3E and CD247 enabling the recruitment of ZAP70. In turn ZAP70 phosphorylates LAT, which recruits numerous signaling molecules to form the LAT signalosome. The LAT signalosome propagates signal branching to three major signaling pathways, the calcium, the mitogen-activated protein kinase (MAPK) kinase and the nuclear factor NF-kappa-B (NF-kB) pathways, leading to the mobilization of transcription factors that are critical for gene expression and essential for T cell growth and differentiation. The T cell repertoire is generated in the thymus, by V-(D)-J rearrangement. This repertoire is then shaped by intrathymic selection events to generate a peripheral T cell pool of self-MH restricted, non-autoaggressive T cells. Post-thymic interaction of alpha-beta TR with the pMH complexes shapes TR structural and functional avidity. This is T cell receptor alpha variable 8-1 from Homo sapiens (Human).